Here is a 1223-residue protein sequence, read N- to C-terminus: Kinesin-like protein costa (1223 aa).

The region spanning 4 to 394 (PIQVAVRICP…LQFAFKVQCV (391 aa)) is the Kinesin motor domain. Residues 13 to 90 (PYTEPSENRK…LPTDSNGNEN (78 aa)) are disordered. A compositionally biased stretch (basic and acidic residues) spans 39-62 (AKAESFSDSEDNKNDASNRQRPEE). Residue 178 to 185 (GQRGQGKT) participates in ATP binding. Disordered stretches follow at residues 494-528 (RSQKQLVPIQEAEEPEESVSEPPNSDNDTDNESQR), 560-604 (KHPK…SIQP), and 625-646 (TAQPPPSVLDPESSIDPLESSA). The segment covering 569–593 (QERDKESKLDAPPEKDKEKIEERKT) has biased composition (basic and acidic residues). Coiled-coil stretches lie at residues 658 to 743 (AAAN…QGRE), 773 to 825 (ESGQ…GASG), and 982 to 1015 (NKVIDLRDSSRKLELQLVQLERERDAWEWKERVL). The interval 774-799 (SGQKLKKLQQSMAESRKQQEELEKKI) is disordered. Over residues 787-799 (ESRKQQEELEKKI) the composition is skewed to basic and acidic residues. Over residues 1162-1178 (TTTATATTTTTTTTTTT) the composition is skewed to low complexity. The interval 1162–1188 (TTTATATTTTTTTTTTTGGKGKERGLP) is disordered.

It belongs to the TRAFAC class myosin-kinesin ATPase superfamily. Kinesin family. KIF27 subfamily. Homodimer (Potential). Binds microtubules. Interacts with ci, smo, sgg, CkIalpha and protein kinase A catalytic subunit.

It is found in the cytoplasm. Its subcellular location is the cytoskeleton. Its function is as follows. Regulates cubitus interruptus (ci) processing by recruiting multiple kinases to promote its efficient phosphorylation. Scaffolds multiple kinases and ci into proximity to promote its hyperphosphorylation, which then targets it for SCFSlimb/proteasome-mediated processing to generate its repressor form. Hh signaling inhibits ci phosphorylation by interfering with the cos-ci-kinases complex formation. This chain is Kinesin-like protein costa (cos), found in Drosophila pseudoobscura pseudoobscura (Fruit fly).